Reading from the N-terminus, the 353-residue chain is Suppressor of RNA-mediated gene silencing (353 aa).

It belongs to the phytoreovirus non-structural protein 10 family.

Suppressor of RNA-mediated gene silencing, also known as post-transcriptional gene silencing (PTGS), a mechanism of plant viral defense that limits the accumulation of viral RNAs. In Alopecurus aequalis (Barnyard grass), this protein is Suppressor of RNA-mediated gene silencing.